Reading from the N-terminus, the 105-residue chain is Translation initiation factor 1A (105 aa).

The 76-residue stretch at 12-87 (TRVRTPREEN…QKCDIIWRYT (76 aa)) folds into the S1-like domain.

It belongs to the eIF-1A family.

Its function is as follows. Seems to be required for maximal rate of protein biosynthesis. Enhances ribosome dissociation into subunits and stabilizes the binding of the initiator Met-tRNA(I) to 40 S ribosomal subunits. In Methanococcus aeolicus (strain ATCC BAA-1280 / DSM 17508 / OCM 812 / Nankai-3), this protein is Translation initiation factor 1A (eIF1A).